A 172-amino-acid polypeptide reads, in one-letter code: MSDQQNTQQDDQPFFNIQRVYLKDMSLEQPNSPGIFLESEAPSVEVQVNVGASQLQEGIFEVVVTGTVTTKVQDKVAFLVEAHQAGIFDIRNVPVEQLDPLLGIACPTILYPYLRGNIADVITRAGFQAIHLSEINFQALYEQRLQAAMEEAQGAEGGNSGIVMPDGSQARH.

A disordered region spans residues 152 to 172 (AQGAEGGNSGIVMPDGSQARH).

The protein belongs to the SecB family. As to quaternary structure, homotetramer, a dimer of dimers. One homotetramer interacts with 1 SecA dimer.

The protein localises to the cytoplasm. In terms of biological role, one of the proteins required for the normal export of preproteins out of the cell cytoplasm. It is a molecular chaperone that binds to a subset of precursor proteins, maintaining them in a translocation-competent state. It also specifically binds to its receptor SecA. The chain is Protein-export protein SecB from Cupriavidus necator (strain ATCC 17699 / DSM 428 / KCTC 22496 / NCIMB 10442 / H16 / Stanier 337) (Ralstonia eutropha).